The chain runs to 66 residues: Large ribosomal subunit protein bL35 (66 aa).

Belongs to the bacterial ribosomal protein bL35 family.

This chain is Large ribosomal subunit protein bL35, found in Phenylobacterium zucineum (strain HLK1).